The primary structure comprises 67 residues: Penaeidin-4d (67 aa).

Residues 1–19 (MRLLVCLVFLASFAMVCQG) form the signal peptide. Disulfide bonds link cysteine 42–cysteine 56, cysteine 45–cysteine 63, and cysteine 57–cysteine 64. Position 66 is a leucine amide (leucine 66).

This sequence belongs to the penaeidin family.

The protein localises to the cytoplasmic granule. Antibacterial and antifungal activity. Presents chitin-binding activity. In Penaeus setiferus (Atlantic white shrimp), this protein is Penaeidin-4d.